Here is a 72-residue protein sequence, read N- to C-terminus: Cytochrome b-c1 complex subunit 8 (72 aa).

Over 2-41 the chain is Mitochondrial matrix; that stretch reads GKQPVKLKAVVYAISPFQQKIMPGLWKDLPGKIHHKVSEN. Residues 42–59 traverse the membrane as a helical segment; it reads WISATLLLGPLVGTYSYV. Residues 60–72 lie on the Mitochondrial intermembrane side of the membrane; it reads QHFLEKEKLEHRY.

The protein belongs to the UQCRQ/QCR8 family. As to quaternary structure, component of the ubiquinol-cytochrome c oxidoreductase (cytochrome b-c1 complex, complex III, CIII), a multisubunit enzyme composed of 3 respiratory subunits cytochrome b, cytochrome c1 and Rieske protein, 2 core protein subunits, and additional low-molecular weight protein subunits. The complex exists as an obligatory dimer and forms supercomplexes (SCs) in the inner mitochondrial membrane with cytochrome c oxidase (complex IV, CIV).

The protein resides in the mitochondrion inner membrane. Functionally, component of the ubiquinol-cytochrome c oxidoreductase, a multisubunit transmembrane complex that is part of the mitochondrial electron transport chain which drives oxidative phosphorylation. The respiratory chain contains 3 multisubunit complexes succinate dehydrogenase (complex II, CII), ubiquinol-cytochrome c oxidoreductase (cytochrome b-c1 complex, complex III, CIII) and cytochrome c oxidase (complex IV, CIV), that cooperate to transfer electrons derived from NADH and succinate to molecular oxygen, creating an electrochemical gradient over the inner membrane that drives transmembrane transport and the ATP synthase. The cytochrome b-c1 complex catalyzes electron transfer from ubiquinol to cytochrome c, linking this redox reaction to translocation of protons across the mitochondrial inner membrane, with protons being carried across the membrane as hydrogens on the quinol. In the process called Q cycle, 2 protons are consumed from the matrix, 4 protons are released into the intermembrane space and 2 electrons are passed to cytochrome c. The protein is Cytochrome b-c1 complex subunit 8 of Solanum tuberosum (Potato).